Here is a 152-residue protein sequence, read N- to C-terminus: Deoxyuridine 5'-triphosphate nucleotidohydrolase (152 aa).

Substrate-binding positions include 71-73, Asn-84, 88-90, and Met-98; these read RSG and LID.

The protein belongs to the dUTPase family. It depends on Mg(2+) as a cofactor.

The catalysed reaction is dUTP + H2O = dUMP + diphosphate + H(+). Its pathway is pyrimidine metabolism; dUMP biosynthesis; dUMP from dCTP (dUTP route): step 2/2. This enzyme is involved in nucleotide metabolism: it produces dUMP, the immediate precursor of thymidine nucleotides and it decreases the intracellular concentration of dUTP so that uracil cannot be incorporated into DNA. This is Deoxyuridine 5'-triphosphate nucleotidohydrolase from Serratia proteamaculans (strain 568).